A 93-amino-acid polypeptide reads, in one-letter code: Acyl carrier protein AcpXL (93 aa).

The 87-residue stretch at 2–88 folds into the Carrier domain; the sequence is SSTFDKVADI…NLCAKIDELV (87 aa). Position 37 is an O-(pantetheine 4'-phosphoryl)serine (Ser37).

4'-phosphopantetheine is transferred from CoA to a specific serine of apo-ACP by AcpS. This modification is essential for activity because fatty acids are bound in thioester linkage to the sulfhydryl of the prosthetic group.

It is found in the cytoplasm. The protein operates within glycolipid biosynthesis; KDO(2)-lipid A biosynthesis. In terms of biological role, carrier of the growing fatty acid chain in fatty acid biosynthesis. Is involved in the transfer of long hydroxylated fatty acids to lipid A. The polypeptide is Acyl carrier protein AcpXL (acpXL) (Brucella melitensis biotype 1 (strain ATCC 23456 / CCUG 17765 / NCTC 10094 / 16M)).